A 162-amino-acid chain; its full sequence is Phosphopantetheine adenylyltransferase (162 aa).

S9 provides a ligand contact to substrate. Residues 9-10 and H17 contribute to the ATP site; that span reads SF. Substrate is bound by residues K41, L73, and K87. Residues 88–90, E98, and 123–129 contribute to the ATP site; these read GLR and YAHLSSS.

Belongs to the bacterial CoaD family. As to quaternary structure, homohexamer. It depends on Mg(2+) as a cofactor.

The protein resides in the cytoplasm. It carries out the reaction (R)-4'-phosphopantetheine + ATP + H(+) = 3'-dephospho-CoA + diphosphate. It functions in the pathway cofactor biosynthesis; coenzyme A biosynthesis; CoA from (R)-pantothenate: step 4/5. Its function is as follows. Reversibly transfers an adenylyl group from ATP to 4'-phosphopantetheine, yielding dephospho-CoA (dPCoA) and pyrophosphate. The polypeptide is Phosphopantetheine adenylyltransferase (Symbiobacterium thermophilum (strain DSM 24528 / JCM 14929 / IAM 14863 / T)).